Consider the following 164-residue polypeptide: Putative pre-16S rRNA nuclease (164 aa).

This sequence belongs to the YqgF nuclease family.

The protein resides in the cytoplasm. Its function is as follows. Could be a nuclease involved in processing of the 5'-end of pre-16S rRNA. In Rhizobium rhizogenes (strain K84 / ATCC BAA-868) (Agrobacterium radiobacter), this protein is Putative pre-16S rRNA nuclease.